The following is a 418-amino-acid chain: MRRLFLPLGLAVAFLSPNFAVAQSDTGTSMVPVFPREAAGPLTLEAALSLAAGSNFNLSAAAKELDSTEGGIMQARVIPNPELKTLVEDTRKSTRTSTAQMNIPIELGGKRSARINAAERTRELAQATLAGVRGDIRAQVIESFFSVLIAQERVKLATGSADIAARGAQAASRRVAAGKISPVDETKARVEQANAELELAEATASLQSARQALTALWGNASPQFAEAQGNLDALPSRPAPELLQKELENSPLVAASRAELDRRQALVGVERSRQYPDLTVSLGAKRDTEANRNMAVIGVAIPLPIFDRNQGNLYSAIRQADKAQDEYLANRISLTRNLLMASNQLSVSRASAQTLKQTVLPGAEQAFNAATIGFEAGKFNYLDVLDAQRTLFQARIRYLGVLGQTYQAATTIDRILGR.

A signal peptide spans Met-1–Ala-22.

Belongs to the outer membrane factor (OMF) (TC 1.B.17) family.

Its subcellular location is the cell outer membrane. Functionally, czcC protein appears to modify the specificity of the system, perhaps by acting on the CzcB protein. When the CzcC protein is added to CzcA and CzcB, the efflux system gains specificity for cadmium and cobalt. The polypeptide is Cobalt-zinc-cadmium resistance protein CzcC (czcC) (Cupriavidus metallidurans (strain ATCC 43123 / DSM 2839 / NBRC 102507 / CH34) (Ralstonia metallidurans)).